The sequence spans 507 residues: ATP synthase subunit alpha, chloroplastic (507 aa).

An ATP-binding site is contributed by 170-177 (GDRQTGKT).

This sequence belongs to the ATPase alpha/beta chains family. In terms of assembly, F-type ATPases have 2 components, CF(1) - the catalytic core - and CF(0) - the membrane proton channel. CF(1) has five subunits: alpha(3), beta(3), gamma(1), delta(1), epsilon(1). CF(0) has four main subunits: a, b, b' and c.

The protein resides in the plastid. It is found in the chloroplast thylakoid membrane. It catalyses the reaction ATP + H2O + 4 H(+)(in) = ADP + phosphate + 5 H(+)(out). Produces ATP from ADP in the presence of a proton gradient across the membrane. The alpha chain is a regulatory subunit. In Oryza nivara (Indian wild rice), this protein is ATP synthase subunit alpha, chloroplastic.